A 221-amino-acid polypeptide reads, in one-letter code: Ependymin (221 aa).

The first 21 residues, 1 to 21 (MQAFAVAALSIWLCLGATTLA), serve as a signal peptide directing secretion. N-linked (GlcNAc...) asparagine glycans are attached at residues Asn37, Asn77, and Asn101.

Belongs to the ependymin family. As to quaternary structure, forms disulfide-linked dimers. Post-translationally, binds calcium through the terminal sialic acids. EPDs are synthesized in the meninx and secreted in the cerebrospinal fluid.

The protein resides in the secreted. Its function is as follows. May play a role in neural plasticity. May be involved during axon regeneration. This chain is Ependymin (epd), found in Esox lucius (Northern pike).